A 371-amino-acid chain; its full sequence is 4-hydroxy-3-methylbut-2-en-1-yl diphosphate synthase (flavodoxin) (371 aa).

[4Fe-4S] cluster contacts are provided by Cys270, Cys273, Cys305, and Glu312.

This sequence belongs to the IspG family. [4Fe-4S] cluster serves as cofactor.

It carries out the reaction (2E)-4-hydroxy-3-methylbut-2-enyl diphosphate + oxidized [flavodoxin] + H2O + 2 H(+) = 2-C-methyl-D-erythritol 2,4-cyclic diphosphate + reduced [flavodoxin]. It functions in the pathway isoprenoid biosynthesis; isopentenyl diphosphate biosynthesis via DXP pathway; isopentenyl diphosphate from 1-deoxy-D-xylulose 5-phosphate: step 5/6. Its function is as follows. Converts 2C-methyl-D-erythritol 2,4-cyclodiphosphate (ME-2,4cPP) into 1-hydroxy-2-methyl-2-(E)-butenyl 4-diphosphate. The polypeptide is 4-hydroxy-3-methylbut-2-en-1-yl diphosphate synthase (flavodoxin) (Chromohalobacter salexigens (strain ATCC BAA-138 / DSM 3043 / CIP 106854 / NCIMB 13768 / 1H11)).